A 318-amino-acid polypeptide reads, in one-letter code: Methionyl-tRNA formyltransferase (318 aa).

110–113 (SLLP) lines the (6S)-5,6,7,8-tetrahydrofolate pocket.

Belongs to the Fmt family.

The catalysed reaction is L-methionyl-tRNA(fMet) + (6R)-10-formyltetrahydrofolate = N-formyl-L-methionyl-tRNA(fMet) + (6S)-5,6,7,8-tetrahydrofolate + H(+). Attaches a formyl group to the free amino group of methionyl-tRNA(fMet). The formyl group appears to play a dual role in the initiator identity of N-formylmethionyl-tRNA by promoting its recognition by IF2 and preventing the misappropriation of this tRNA by the elongation apparatus. This chain is Methionyl-tRNA formyltransferase, found in Geobacillus sp. (strain WCH70).